Here is a 203-residue protein sequence, read N- to C-terminus: MKLENHNLAVASLKTQRISAFKARLVAVLLKGKKVSDALAILAHTKKKASPIFTKLINSAVANAINNHGFEHSNLIIKAAIVNEGPTLKRFRPRAKGAASQILKRTSHFKVILVSQNGGESQNQEYQETEKNLVTKSPENTQSGALSQQSQAEQPQNDPENGVDSQLSAKTNSTTTAKKTDLADNSTKNDATNTVLAQEKEVK.

The span at 138 to 167 (PENTQSGALSQQSQAEQPQNDPENGVDSQL) shows a compositional bias: polar residues. The interval 138 to 203 (PENTQSGALS…TVLAQEKEVK (66 aa)) is disordered. Positions 168–177 (SAKTNSTTTA) are enriched in low complexity. Polar residues predominate over residues 183-196 (ADNSTKNDATNTVL).

It belongs to the universal ribosomal protein uL22 family. Part of the 50S ribosomal subunit.

In terms of biological role, this protein binds specifically to 23S rRNA; its binding is stimulated by other ribosomal proteins, e.g. L4, L17, and L20. It is important during the early stages of 50S assembly. It makes multiple contacts with different domains of the 23S rRNA in the assembled 50S subunit and ribosome. The globular domain of the protein is located near the polypeptide exit tunnel on the outside of the subunit, while an extended beta-hairpin is found that lines the wall of the exit tunnel in the center of the 70S ribosome. The protein is Large ribosomal subunit protein uL22 of Mesomycoplasma hyopneumoniae (strain 7448) (Mycoplasma hyopneumoniae).